A 579-amino-acid chain; its full sequence is Glucans biosynthesis protein G (579 aa).

Positions 1 to 37 (MIVSPHKASRIPGNRLRKALMASAALVGLMSAGQLWA) are cleaved as a signal peptide. A disordered region spans residues 516–579 (AKPAEEAKHD…TWSYQLPADE (64 aa)). Positions 517-539 (KPAEEAKHDKTAAKHGKAEKAAK) are enriched in basic and acidic residues.

Belongs to the OpgD/OpgG family.

The protein resides in the periplasm. The protein operates within glycan metabolism; osmoregulated periplasmic glucan (OPG) biosynthesis. Involved in the biosynthesis of osmoregulated periplasmic glucans (OPGs). The protein is Glucans biosynthesis protein G of Pseudomonas putida (strain W619).